We begin with the raw amino-acid sequence, 453 residues long: Bifunctional protein GlmU (453 aa).

The interval 1-225 (MNIVILAAGT…EWETLGVNSK (225 aa)) is pyrophosphorylase. UDP-N-acetyl-alpha-D-glucosamine is bound by residues 6–9 (LAAG), Lys20, Gln71, 76–77 (GT), 98–100 (YGD), Gly135, Glu150, Asn165, and Asn223. Asp100 provides a ligand contact to Mg(2+). Asn223 contributes to the Mg(2+) binding site. The tract at residues 226-246 (AQLAELERIHQRNLADALLAA) is linker. An N-acetyltransferase region spans residues 247 to 453 (GVTLADPARI…GYVRPVKKKS (207 aa)). The UDP-N-acetyl-alpha-D-glucosamine site is built by Arg329 and Lys347. Catalysis depends on His359, which acts as the Proton acceptor. UDP-N-acetyl-alpha-D-glucosamine contacts are provided by Tyr362 and Asn373. Acetyl-CoA is bound by residues Ala376, 382–383 (NY), Ser401, and Ala419.

The protein in the N-terminal section; belongs to the N-acetylglucosamine-1-phosphate uridyltransferase family. This sequence in the C-terminal section; belongs to the transferase hexapeptide repeat family. As to quaternary structure, homotrimer. Requires Mg(2+) as cofactor.

Its subcellular location is the cytoplasm. It carries out the reaction alpha-D-glucosamine 1-phosphate + acetyl-CoA = N-acetyl-alpha-D-glucosamine 1-phosphate + CoA + H(+). The catalysed reaction is N-acetyl-alpha-D-glucosamine 1-phosphate + UTP + H(+) = UDP-N-acetyl-alpha-D-glucosamine + diphosphate. Its pathway is nucleotide-sugar biosynthesis; UDP-N-acetyl-alpha-D-glucosamine biosynthesis; N-acetyl-alpha-D-glucosamine 1-phosphate from alpha-D-glucosamine 6-phosphate (route II): step 2/2. The protein operates within nucleotide-sugar biosynthesis; UDP-N-acetyl-alpha-D-glucosamine biosynthesis; UDP-N-acetyl-alpha-D-glucosamine from N-acetyl-alpha-D-glucosamine 1-phosphate: step 1/1. It participates in bacterial outer membrane biogenesis; LPS lipid A biosynthesis. Functionally, catalyzes the last two sequential reactions in the de novo biosynthetic pathway for UDP-N-acetylglucosamine (UDP-GlcNAc). The C-terminal domain catalyzes the transfer of acetyl group from acetyl coenzyme A to glucosamine-1-phosphate (GlcN-1-P) to produce N-acetylglucosamine-1-phosphate (GlcNAc-1-P), which is converted into UDP-GlcNAc by the transfer of uridine 5-monophosphate (from uridine 5-triphosphate), a reaction catalyzed by the N-terminal domain. The polypeptide is Bifunctional protein GlmU (Burkholderia mallei (strain NCTC 10247)).